The primary structure comprises 134 residues: Protein NrdI (134 aa).

This sequence belongs to the NrdI family.

Functionally, probably involved in ribonucleotide reductase function. This Serratia proteamaculans (strain 568) protein is Protein NrdI.